A 313-amino-acid polypeptide reads, in one-letter code: MKHLLSIADLSKDDIIGLMDEADRFREALLGRDIKKLPTLRGRTIFTLFYENSTRTRSSFETAGKWMSADVINISAGSSSVKKGESLKDTGLTLSAIGADAIVMRHYSSGAAEQLARWVAPGGVGPSVINAGDGAHQHPTQALLDAVTIRQRLGDIDGRKVVIVGDCLHSRVVRSNVDLLTTLGAEVVLVGPPTLLPAGIDTWPVRYSYDMDAEIYDADVVMMLRVQQERMHGGFFPTHREYATLYGLSAERERKLQDHTIVMHPGPMLRGMEINFGVADAPRTAVLQQVSNGVHTRMAVLFTLIAGQDAAAF.

Carbamoyl phosphate-binding residues include Arg-55 and Thr-56. Residue Lys-83 coordinates L-aspartate. The carbamoyl phosphate site is built by Arg-105, His-138, and Gln-141. L-aspartate is bound by residues Arg-171 and Arg-225. Carbamoyl phosphate contacts are provided by Gly-266 and Pro-267.

This sequence belongs to the aspartate/ornithine carbamoyltransferase superfamily. ATCase family. In terms of assembly, heterododecamer (2C3:3R2) of six catalytic PyrB chains organized as two trimers (C3), and six regulatory PyrI chains organized as three dimers (R2).

The enzyme catalyses carbamoyl phosphate + L-aspartate = N-carbamoyl-L-aspartate + phosphate + H(+). It functions in the pathway pyrimidine metabolism; UMP biosynthesis via de novo pathway; (S)-dihydroorotate from bicarbonate: step 2/3. In terms of biological role, catalyzes the condensation of carbamoyl phosphate and aspartate to form carbamoyl aspartate and inorganic phosphate, the committed step in the de novo pyrimidine nucleotide biosynthesis pathway. The polypeptide is Aspartate carbamoyltransferase catalytic subunit (Corynebacterium diphtheriae (strain ATCC 700971 / NCTC 13129 / Biotype gravis)).